Here is an 863-residue protein sequence, read N- to C-terminus: DNA mismatch repair protein MutS (863 aa).

An ATP-binding site is contributed by glycine 607 to serine 614.

It belongs to the DNA mismatch repair MutS family.

This protein is involved in the repair of mismatches in DNA. It is possible that it carries out the mismatch recognition step. This protein has a weak ATPase activity. The polypeptide is DNA mismatch repair protein MutS (Caldicellulosiruptor saccharolyticus (strain ATCC 43494 / DSM 8903 / Tp8T 6331)).